Reading from the N-terminus, the 125-residue chain is Fluoride-specific ion channel FluC (125 aa).

Transmembrane regions (helical) follow at residues 1-21, 32-52, 68-88, and 101-121; these read MIQA…RYYV, AFPW…GVFA, LLIT…LDAI, and IYIA…LAVM. Na(+) is bound by residues glycine 75 and threonine 78.

It belongs to the fluoride channel Fluc/FEX (TC 1.A.43) family.

It is found in the cell inner membrane. The enzyme catalyses fluoride(in) = fluoride(out). With respect to regulation, na(+) is not transported, but it plays an essential structural role and its presence is essential for fluoride channel function. Its function is as follows. Fluoride-specific ion channel. Important for reducing fluoride concentration in the cell, thus reducing its toxicity. In Rhizobium johnstonii (strain DSM 114642 / LMG 32736 / 3841) (Rhizobium leguminosarum bv. viciae), this protein is Fluoride-specific ion channel FluC.